A 26-amino-acid chain; its full sequence is Neprilysin (26 aa).

Belongs to the peptidase M13 family. Zn(2+) serves as cofactor.

Its subcellular location is the cell membrane. The catalysed reaction is Preferential cleavage of polypeptides between hydrophobic residues, particularly with Phe or Tyr at P1'.. It carries out the reaction substance P + H2O = substance P(1-9) + L-Leu-L-Met-NH2. It catalyses the reaction substance P + H2O = substance P(1-7) + L-Phe-Gly-L-Leu-L-Met-NH2. The enzyme catalyses neurotensin + H2O = neurotensin(1-11) + L-isoleucyl-L-leucine. The catalysed reaction is neurotensin + H2O = neurotensin(1-10) + L-tyrosyl-L-isoleucyl-L-leucine. In terms of biological role, thermolysin-like specificity, but is almost confined on acting on polypeptides of up to 30 amino acids. Biologically important in the destruction of opioid peptides such as Met- and Leu-enkephalins by cleavage of a Gly-Phe bond. Catalyzes cleavage of bradykinin, substance P and neurotensin peptides. Able to cleave angiotensin-1, angiotensin-2 and angiotensin 1-9. Involved in the degradation of atrial natriuretic factor (ANF) and brain natriuretic factor (BNP(1-32)). Displays UV-inducible elastase activity toward skin preelastic and elastic fibers. The protein is Neprilysin (MME) of Sus scrofa (Pig).